The primary structure comprises 257 residues: Imidazole glycerol phosphate synthase subunit HisF (257 aa).

Catalysis depends on residues D11 and D130.

The protein belongs to the HisA/HisF family. As to quaternary structure, heterodimer of HisH and HisF.

The protein localises to the cytoplasm. It carries out the reaction 5-[(5-phospho-1-deoxy-D-ribulos-1-ylimino)methylamino]-1-(5-phospho-beta-D-ribosyl)imidazole-4-carboxamide + L-glutamine = D-erythro-1-(imidazol-4-yl)glycerol 3-phosphate + 5-amino-1-(5-phospho-beta-D-ribosyl)imidazole-4-carboxamide + L-glutamate + H(+). The protein operates within amino-acid biosynthesis; L-histidine biosynthesis; L-histidine from 5-phospho-alpha-D-ribose 1-diphosphate: step 5/9. Its function is as follows. IGPS catalyzes the conversion of PRFAR and glutamine to IGP, AICAR and glutamate. The HisF subunit catalyzes the cyclization activity that produces IGP and AICAR from PRFAR using the ammonia provided by the HisH subunit. This is Imidazole glycerol phosphate synthase subunit HisF from Photobacterium profundum (strain SS9).